A 167-amino-acid chain; its full sequence is MGIFALFAVLWTTLLVTSHAYVALPCCAIQASAASTLPLFFAVHSIHFADPNHCNGVCIAKLRSKTGDITVETCVNGFNLRSFLVAVVRRLGSWASQENLRLLWYLQRSLTAYTVGFNATTADSSIHNVNIIIISVGKAMNRTGSVSGSQTRAKSSSRRAHAGQKGK.

An N-terminal signal peptide occupies residues M1–A20. The tract at residues S18–I131 is interaction with gH. Positions R142–K154 are enriched in polar residues. The disordered stretch occupies residues R142 to K167. Over residues S155–K167 the composition is skewed to basic residues.

This sequence belongs to the herpesviridae glycoprotein L family. Interacts with glycoprotein H (gH); this interaction is necessary for the correct processing and cell surface expression of gH. The heterodimer gH/gL seems to interact with gB trimers during fusion. When in complex with gH, interacts with host EPHA2; this interaction triggers EPHA2 phosphorylation and endocytosis, allowing virus entry.

The protein localises to the virion membrane. It is found in the host cell membrane. It localises to the host Golgi apparatus. The protein resides in the host trans-Golgi network. In terms of biological role, the heterodimer glycoprotein H-glycoprotein L is required for the fusion of viral and plasma membranes leading to virus entry into the host cell. Acts as a functional inhibitor of gH and maintains gH in an inhibited form. Upon binding to host integrins, gL dissociates from gH leading to activation of the viral fusion glycoproteins gB and gH. Targets heparan sulfate proteoglycans of the syndecan family as well as host EPHA2 to promote viral entry. In Human herpesvirus 8 type P (isolate GK18) (HHV-8), this protein is Envelope glycoprotein L.